Reading from the N-terminus, the 777-residue chain is Glucocorticoid receptor (777 aa).

Over residues 1-14 the composition is skewed to basic and acidic residues; it reads MDSKESLTPGREEN. Residues 1–23 are disordered; sequence MDSKESLTPGREENPSSVLAQER. A modulating region spans residues 1 to 420; that stretch reads MDSKESLTPG…TATTGPPPKL (420 aa). T8 is subject to Phosphothreonine. An Omega-N-methylarginine modification is found at R23. Phosphoserine occurs at positions 45, 113, 134, and 141. A compositionally biased stretch (polar residues) spans 130–140; the sequence is NRSTSVPENPK. The segment at 130–183 is disordered; it reads NRSTSVPENPKSSASTAVSAAPTEKEFPKTHSDISSEQQHLKGQTGTNGGNVKL. Residues 141–150 are compositionally biased toward low complexity; the sequence is SSASTAVSAA. Positions 152–163 are enriched in basic and acidic residues; sequence TEKEFPKTHSDI. Residues 164-174 show a composition bias toward polar residues; it reads SSEQQHLKGQT. Phosphoserine is present on residues S203, S211, and S226. K258 participates in a covalent cross-link: Glycyl lysine isopeptide (Lys-Gly) (interchain with G-Cter in SUMO2). S267 is subject to Phosphoserine. Residues K277 and K293 each participate in a glycyl lysine isopeptide (Lys-Gly) (interchain with G-Cter in SUMO); alternate cross-link. Residues K277 and K293 each participate in a glycyl lysine isopeptide (Lys-Gly) (interchain with G-Cter in SUMO2); alternate cross-link. The segment covering 394-414 has biased composition (low complexity); the sequence is SSPSMRPDVSSPPSSSSTATT. Residues 394–415 form a disordered region; that stretch reads SSPSMRPDVSSPPSSSSTATTG. S404 carries the post-translational modification Phosphoserine. K419 is covalently cross-linked (Glycyl lysine isopeptide (Lys-Gly) (interchain with G-Cter in ubiquitin)). 2 NR C4-type zinc fingers span residues 421-441 and 457-476; these read CLVC…CGSC and CAGR…CPAC. The segment at residues 421–486 is a DNA-binding region (nuclear receptor); the sequence is CLVCSDEASG…RYRKCLQAGM (66 aa). 4 positions are modified to N6-acetyllysine: K480, K492, K494, and K495. The interaction with CLOCK stretch occupies residues 485–777; sequence GMNLEARKTK…NIKKLLFHQK (293 aa). Positions 487 to 523 are hinge; the sequence is NLEARKTKKKIKGIQQATTGVSQETPENPANKTIVPA. One can recognise an NR LBD domain in the interval 524–758; sequence TLPQLTPTLV…FPEMLAEIIT (235 aa). Positions 532 to 697 are interaction with CRY1; that stretch reads LVSLLEVIEP…EIRMTYIKEL (166 aa). K703 is covalently cross-linked (Glycyl lysine isopeptide (Lys-Gly) (interchain with G-Cter in SUMO)).

It belongs to the nuclear hormone receptor family. NR3 subfamily. As to quaternary structure, heteromultimeric cytoplasmic complex with HSP90AA1, HSPA1A/HSPA1B, and FKBP5 or another immunophilin such as PPID, STIP1, or the immunophilin homolog PPP5C. Upon ligand binding FKBP5 dissociates from the complex and FKBP4 takes its place, thereby linking the complex to dynein and mediating transport to the nucleus, where the complex dissociates. Probably forms a complex composed of chaperones HSP90 and HSP70, co-chaperones CDC37, PPP5C, TSC1 and client protein TSC2, CDK4, AKT, RAF1 and NR3C1; this complex does not contain co-chaperones STIP1/HOP and PTGES3/p23. Directly interacts with UNC45A. Binds to DNA as a homodimer, and as heterodimer with NR3C2 or the retinoid X receptor. Binds STAT5A and STAT5B homodimers and heterodimers. Interacts with NRIP1, POU2F1, POU2F2 and TRIM28. Interacts with several coactivator complexes, including the SMARCA4 complex, CREBBP/EP300, TADA2L (Ada complex) and p160 coactivators such as NCOA2 and NCOA6. Interaction with BAG1 inhibits transactivation. Interacts with HEXIM1 and TGFB1I1. Interacts with NCOA1. Interacts with NCOA3, SMARCA4, SMARCC1, SMARCD1, and SMARCE1. Interacts with CLOCK, CRY1 and CRY2 in a ligand-dependent fashion. Interacts with CIART. Interacts with RWDD3. Interacts with UBE2I/UBC9 and this interaction is enhanced in the presence of RWDD3. Interacts with GRIP1. Interacts with NR4A3 (via nuclear receptor DNA-binding domain), represses transcription activity of NR4A3 on the POMC promoter Nur response element (NurRE). Directly interacts with PNRC2 to attract and form a complex with UPF1 and DCP1A; the interaction leads to rapid mRNA degradation. Interacts with GSK3B. Interacts with FNIP1 and FNIP2. Interacts (via C-terminus) with HNRNPU (via C-terminus). Interacts with MCM3AP. Interacts (via domain NR LBD) with HSP90AA1 and HSP90AB1. In the absence of hormonal ligand, interacts with TACC1. Interacts (via NR LBD domain) with ZNF764 (via KRAB domain); the interaction regulates transcription factor activity of NR3C1 by directing its actions toward certain biologic pathways. Post-translationally, acetylation by CLOCK reduces its binding to glucocorticoid response elements and its transcriptional activity. In terms of processing, increased proteasome-mediated degradation in response to glucocorticoids. Phosphorylated in the absence of hormone; becomes hyperphosphorylated in the presence of glucocorticoid. The Ser-203, Ser-226 and Ser-404-phosphorylated forms are mainly cytoplasmic, and the Ser-211-phosphorylated form is nuclear. Phosphorylation at Ser-211 increases transcriptional activity. Phosphorylation at Ser-203, Ser-226 and Ser-404 decreases signaling capacity. Phosphorylation at Ser-404 may protect from glucocorticoid-induced apoptosis. Phosphorylation at Ser-203 and Ser-211 is not required in regulation of chromosome segregation. May be dephosphorylated by PPP5C, attenuates NR3C1 action. Post-translationally, ubiquitinated by UBR5, leading to its degradation: UBR5 specifically recognizes and binds ligand-bound NR3C1 when it is not associated with coactivators (NCOAs). In presence of NCOAs, the UBR5-degron is not accessible, preventing its ubiquitination and degradation. In terms of processing, sumoylation at Lys-277 and Lys-293 negatively regulates its transcriptional activity. Sumoylation at Lys-703 positively regulates its transcriptional activity in the presence of RWDD3. Sumoylation at Lys-277 and Lys-293 is dispensable whereas sumoylation at Lys-703 is critical for the stimulatory effect of RWDD3 on its transcriptional activity. Heat shock increases sumoylation in a RWDD3-dependent manner.

The protein resides in the cytoplasm. Its subcellular location is the nucleus. The protein localises to the mitochondrion. It is found in the cytoskeleton. It localises to the spindle. The protein resides in the microtubule organizing center. Its subcellular location is the centrosome. The protein localises to the chromosome. It is found in the nucleoplasm. Receptor for glucocorticoids (GC). Has a dual mode of action: as a transcription factor that binds to glucocorticoid response elements (GRE), both for nuclear and mitochondrial DNA, and as a modulator of other transcription factors. Affects inflammatory responses, cellular proliferation and differentiation in target tissues. Involved in chromatin remodeling. Plays a role in rapid mRNA degradation by binding to the 5' UTR of target mRNAs and interacting with PNRC2 in a ligand-dependent manner which recruits the RNA helicase UPF1 and the mRNA-decapping enzyme DCP1A, leading to RNA decay. Could act as a coactivator for STAT5-dependent transcription upon growth hormone (GH) stimulation and could reveal an essential role of hepatic GR in the control of body growth. Mediates glucocorticoid-induced apoptosis. Promotes accurate chromosome segregation during mitosis. May act as a tumor suppressor. May play a negative role in adipogenesis through the regulation of lipolytic and antilipogenic gene expression. In Pongo abelii (Sumatran orangutan), this protein is Glucocorticoid receptor (NR3C1).